A 178-amino-acid polypeptide reads, in one-letter code: Probetacellulin (178 aa).

The signal sequence occupies residues 1–31 (MARAAPGSGASPLPLLPALALGLVILHCVVA). Residues 32–118 (DGNSTRSPED…LFYLRGDRGQ (87 aa)) are Extracellular-facing. The N-linked (GlcNAc...) asparagine glycan is linked to asparagine 34. The 41-residue stretch at 65 to 105 (HFSRCPKQYKHYCIKGRCRFVVAEQTPSCVCDEGYAGARCE) folds into the EGF-like domain. 3 disulfide bridges follow: cysteine 69–cysteine 82, cysteine 77–cysteine 93, and cysteine 95–cysteine 104. The propeptide at 112-178 (LRGDRGQILV…NDDIQETSIA (67 aa)) is removed in mature form. Residues 119-139 (ILVICLIAVMVIFIILVVSIC) form a helical membrane-spanning segment. Topologically, residues 140–178 (TCCHPLRKRRKRRKKEEEMETLGKDITPINDDIQETSIA) are cytoplasmic.

In terms of assembly, monomer. Interacts with EGFR and ERBB4. In terms of tissue distribution, expressed in a wide range of tissues, including the mammary gland.

It is found in the secreted. The protein localises to the extracellular space. It localises to the cell membrane. Functionally, growth factor that binds to EGFR, ERBB4 and other EGF receptor family members. Potent mitogen for retinal pigment epithelial cells and vascular smooth muscle cells. The chain is Probetacellulin (BTC) from Bos taurus (Bovine).